The primary structure comprises 211 residues: Tudor-interacting repair regulator protein (211 aa).

Residues Lys10 and Lys151 each participate in a glycyl lysine isopeptide (Lys-Gly) (interchain with G-Cter in ubiquitin) cross-link. An interaction with PXN region spans residues 118-205; that stretch reads TLEQLHAVEI…TEKQKKALEK (88 aa).

It belongs to the Nudix hydrolase family. TIRR subfamily. In terms of assembly, homodimer. Interacts with TP53BP1 (via the Tudor-like domain); interaction is abolished following DNA damage and TP53BP1 phosphorylation by ATM. Interacts (via the cytoplasmic part) with SDC4. Interacts with TGFB1I1 and PXN.

The protein localises to the nucleus. Its function is as follows. Key regulator of TP53BP1 required to stabilize TP53BP1 and regulate its recruitment to chromatin. In absence of DNA damage, interacts with the tandem Tudor-like domain of TP53BP1, masking the region that binds histone H4 dimethylated at 'Lys-20' (H4K20me2), thereby preventing TP53BP1 recruitment to chromatin and maintaining TP53BP1 localization to the nucleus. Following DNA damage, ATM-induced phosphorylation of TP53BP1 and subsequent recruitment of RIF1 leads to dissociate NUDT16L1/TIRR from TP53BP1, unmasking the tandem Tudor-like domain and allowing recruitment of TP53BP1 to DNA double strand breaks (DSBs). Binds U8 snoRNA. This is Tudor-interacting repair regulator protein from Homo sapiens (Human).